The following is a 525-amino-acid chain: Membrane-bound lytic murein transglycosylase F (525 aa).

Residues 1–24 (MQIRHFNRLKRSVLLFASVLLLSA) form the signal peptide. A non-LT domain region spans residues 25 to 284 (CQIESQPKSE…SLEEKYIGHI (260 aa)). An LT domain region spans residues 286–525 (AFDYVDTRAF…VDEDLDQEEE (240 aa)). Residue E329 is part of the active site. The tract at residues 506–525 (VSGASDITNEVDEDLDQEEE) is disordered. Residues 514–525 (NEVDEDLDQEEE) are compositionally biased toward acidic residues.

This sequence in the N-terminal section; belongs to the bacterial solute-binding protein 3 family. The protein in the C-terminal section; belongs to the transglycosylase Slt family.

It localises to the cell outer membrane. The catalysed reaction is Exolytic cleavage of the (1-&gt;4)-beta-glycosidic linkage between N-acetylmuramic acid (MurNAc) and N-acetylglucosamine (GlcNAc) residues in peptidoglycan, from either the reducing or the non-reducing ends of the peptidoglycan chains, with concomitant formation of a 1,6-anhydrobond in the MurNAc residue.. Its function is as follows. Murein-degrading enzyme that degrades murein glycan strands and insoluble, high-molecular weight murein sacculi, with the concomitant formation of a 1,6-anhydromuramoyl product. Lytic transglycosylases (LTs) play an integral role in the metabolism of the peptidoglycan (PG) sacculus. Their lytic action creates space within the PG sacculus to allow for its expansion as well as for the insertion of various structures such as secretion systems and flagella. The sequence is that of Membrane-bound lytic murein transglycosylase F from Vibrio parahaemolyticus serotype O3:K6 (strain RIMD 2210633).